The primary structure comprises 526 residues: Probable rhamnogalacturonase B (526 aa).

An N-terminal signal peptide occupies residues 1 to 20 (MHVNTLSVLSLVGLVPLAAA). A disulfide bond links C41 and C67. N144 carries an N-linked (GlcNAc...) asparagine glycan. D218 serves as the catalytic Proton donor. C220 and C237 are oxidised to a cystine. 2 N-linked (GlcNAc...) asparagine glycosylation sites follow: N238 and N253. The active site involves H293. N320 carries N-linked (GlcNAc...) asparagine glycosylation. 2 cysteine pairs are disulfide-bonded: C343/C349 and C371/C380.

This sequence belongs to the glycosyl hydrolase 28 family.

It is found in the secreted. The catalysed reaction is Endohydrolysis of alpha-D-GalA-(1-&gt;2)-alpha-L-Rha glycosidic bond in the rhamnogalacturonan I backbone with initial inversion of anomeric configuration releasing oligosaccharides with beta-D-GalA at the reducing end.. Functionally, pectinolytic enzymes consist of four classes of enzymes: pectine lyase, polygalacturonase, pectin methylesterase and rhamnogalacturonase. Hydrolyzes alpha-D-galacturonopyranosyl-(1,2)-alpha-L-rhamnopyranosyl linkages in the backbone of the hairy regions of pectins. This Aspergillus terreus (strain NIH 2624 / FGSC A1156) protein is Probable rhamnogalacturonase B (rhgB).